A 210-amino-acid chain; its full sequence is Ion-translocating oxidoreductase complex subunit G (210 aa).

The helical transmembrane segment at 9–29 (SLVLALFAIAATALVTITYAL) threads the bilayer. Position 176 is an FMN phosphoryl threonine (T176).

This sequence belongs to the RnfG family. As to quaternary structure, the complex is composed of six subunits: RnfA, RnfB, RnfC, RnfD, RnfE and RnfG. FMN serves as cofactor.

The protein resides in the cell inner membrane. Its function is as follows. Part of a membrane-bound complex that couples electron transfer with translocation of ions across the membrane. This Aliivibrio fischeri (strain MJ11) (Vibrio fischeri) protein is Ion-translocating oxidoreductase complex subunit G.